A 434-amino-acid chain; its full sequence is dTDP-D-glucose 4,6-dehydratase (434 aa).

Thr134 contacts substrate. Asp135 functions as the Proton donor in the catalytic mechanism. Active-site proton acceptor residues include Glu136 and Tyr169. The span at 286 to 309 (NNNNNNNNNNNNNNNNNNNNNNNN) shows a compositional bias: low complexity. The tract at residues 286-310 (NNNNNNNNNNNNNNNNNNNNNNNND) is disordered.

It belongs to the NAD(P)-dependent epimerase/dehydratase family. dTDP-glucose dehydratase subfamily. It depends on NAD(+) as a cofactor.

It catalyses the reaction dTDP-alpha-D-glucose = dTDP-4-dehydro-6-deoxy-alpha-D-glucose + H2O. The protein is dTDP-D-glucose 4,6-dehydratase (tgds) of Dictyostelium discoideum (Social amoeba).